Reading from the N-terminus, the 297-residue chain is Phosphoribosylaminoimidazole-succinocarboxamide synthase (297 aa).

This sequence belongs to the SAICAR synthetase family.

The catalysed reaction is 5-amino-1-(5-phospho-D-ribosyl)imidazole-4-carboxylate + L-aspartate + ATP = (2S)-2-[5-amino-1-(5-phospho-beta-D-ribosyl)imidazole-4-carboxamido]succinate + ADP + phosphate + 2 H(+). Its pathway is purine metabolism; IMP biosynthesis via de novo pathway; 5-amino-1-(5-phospho-D-ribosyl)imidazole-4-carboxamide from 5-amino-1-(5-phospho-D-ribosyl)imidazole-4-carboxylate: step 1/2. In Corynebacterium diphtheriae (strain ATCC 700971 / NCTC 13129 / Biotype gravis), this protein is Phosphoribosylaminoimidazole-succinocarboxamide synthase.